A 69-amino-acid chain; its full sequence is Snake venom metalloproteinase BnP2 (69 aa).

Residues 1 to 69 form the Peptidase M12B domain; it reads YIELAVVADH…EWRERDIIPR (69 aa). Ca(2+) is bound at residue Glu-3.

Belongs to the venom metalloproteinase (M12B) family. P-I subfamily. In terms of assembly, monomer. Zn(2+) is required as a cofactor. Expressed by the venom gland.

The protein localises to the secreted. With respect to regulation, inhibited by EDTA. Functionally, this protein is a zinc protease from snake venom that is devoid of significant myotoxic and hemorrhagic activities. It hydrolyzes the Aalpha-chain and more slowly the Bbeta-chain of fibrin and fibrinogen, without affecting the gamma-chains. It induces cell detachment and a apoptosis (anoikis) in endothelial cells. This is Snake venom metalloproteinase BnP2 from Bothrops pauloensis (Neuwied's lancehead).